The chain runs to 109 residues: ATP synthase subunit c (109 aa).

2 consecutive transmembrane segments (helical) span residues 42 to 62 (YIGT…QGFS) and 88 to 108 (LALA…IIFV).

This sequence belongs to the ATPase C chain family. As to quaternary structure, F-type ATPases have 2 components, F(1) - the catalytic core - and F(0) - the membrane proton channel. F(1) has five subunits: alpha(3), beta(3), gamma(1), delta(1), epsilon(1). F(0) has three main subunits: a(1), b(2) and c(10-14). The alpha and beta chains form an alternating ring which encloses part of the gamma chain. F(1) is attached to F(0) by a central stalk formed by the gamma and epsilon chains, while a peripheral stalk is formed by the delta and b chains.

Its subcellular location is the cell membrane. Functionally, f(1)F(0) ATP synthase produces ATP from ADP in the presence of a proton or sodium gradient. F-type ATPases consist of two structural domains, F(1) containing the extramembraneous catalytic core and F(0) containing the membrane proton channel, linked together by a central stalk and a peripheral stalk. During catalysis, ATP synthesis in the catalytic domain of F(1) is coupled via a rotary mechanism of the central stalk subunits to proton translocation. In terms of biological role, key component of the F(0) channel; it plays a direct role in translocation across the membrane. A homomeric c-ring of between 10-14 subunits forms the central stalk rotor element with the F(1) delta and epsilon subunits. This Ureaplasma urealyticum serovar 10 (strain ATCC 33699 / Western) protein is ATP synthase subunit c.